The sequence spans 180 residues: Large ribosomal subunit protein uL6 (180 aa).

The protein belongs to the universal ribosomal protein uL6 family. In terms of assembly, part of the 50S ribosomal subunit.

Its function is as follows. This protein binds to the 23S rRNA, and is important in its secondary structure. It is located near the subunit interface in the base of the L7/L12 stalk, and near the tRNA binding site of the peptidyltransferase center. In Dictyoglomus thermophilum (strain ATCC 35947 / DSM 3960 / H-6-12), this protein is Large ribosomal subunit protein uL6.